Here is a 342-residue protein sequence, read N- to C-terminus: Trace amine-associated receptor 3 (342 aa).

Topologically, residues 1 to 35 are extracellular; the sequence is MDLIYIPEDLSSCPKFGNKSCPPTNRSFRVRLIMY. Residues Asn18 and Asn25 are each glycosylated (N-linked (GlcNAc...) asparagine). 2 disulfides stabilise this stretch: Cys21-Cys185 and Cys104-Cys189. The chain crosses the membrane as a helical span at residues 36 to 56; it reads LLMTGAMVITIFGNLVIIISI. The Cytoplasmic portion of the chain corresponds to 57 to 68; sequence SHFKQLHSPTNF. A helical membrane pass occupies residues 69–89; that stretch reads LILSMATTDFLLGFVIMPYSM. The Extracellular portion of the chain corresponds to 90 to 150; it reads VRSVESCWYF…TTMTASMIKR (61 aa). A helical membrane pass occupies residues 151–168; it reads LLFFCWAAPALFSFGLVL. Topologically, residues 169 to 172 are cytoplasmic; sequence SEAN. The extracellular Loop 2 (ECL2) stretch occupies residues 173–186; that stretch reads VSGMQSYEILIACF. The helical transmembrane segment at 173 to 193 threads the bilayer; that stretch reads VSGMQSYEILIACFNFCALTF. At 194-198 the chain is on the extracellular side; it reads NKFWG. Residues 199-223 traverse the membrane as a helical segment; that stretch reads TILFTTCFFTPGSIMVGIYGKIFIV. At 224-256 the chain is on the cytoplasmic side; it reads SRRHARALGNMPENTKGAGRNLSKKKDRKAAKT. A helical membrane pass occupies residues 257 to 277; that stretch reads LGIVMGVFLACWLPCFLAVLI. The Extracellular segment spans residues 278-286; the sequence is DPYLDYSTP. A helical membrane pass occupies residues 287–307; the sequence is IIVLDLLVWLGYFNSTCNPLI. The Cytoplasmic segment spans residues 308-342; the sequence is HGFFYPWFRKALEHIVSGKIFRSNSDTANLFPEAH.

Belongs to the G-protein coupled receptor 1 family.

It localises to the cell membrane. Olfactory receptor activated by several primary trace amines, including isoamylamine. Activated by isoamylamine and cyclohexylamine, but not to the corresponding alcohols, isoamylalcohol and cyclohexanol. This receptor is probably mediated by the G(s)-class of G-proteins which activate adenylate cyclase. The polypeptide is Trace amine-associated receptor 3 (Taar3) (Rattus norvegicus (Rat)).